The following is a 351-amino-acid chain: uncharacterized protein (351 aa).

Mn(2+) contacts are provided by Asp215, Asp226, His290, Glu319, and Glu333.

This sequence belongs to the peptidase M24B family. Mn(2+) serves as cofactor.

This is an uncharacterized protein from Staphylococcus haemolyticus (strain JCSC1435).